The sequence spans 201 residues: ADP-ribosylation factor-like protein 4D (201 aa).

Glycine 2 carries the N-myristoyl glycine lipid modification. GTP is bound by residues 28–35, 76–80, and 135–138; these read GLDSAGKT, DVGGQ, and NKQD.

It belongs to the small GTPase superfamily. Arf family. Interacts with CYTH2; the interaction is direct and ARL4D GTP-dependent. Does not interact with ARL4D.

It is found in the nucleus. Its subcellular location is the nucleolus. The protein resides in the cell membrane. The protein localises to the cytoplasm. In terms of biological role, small GTP-binding protein which cycles between an inactive GDP-bound and an active GTP-bound form, and the rate of cycling is regulated by guanine nucleotide exchange factors (GEF) and GTPase-activating proteins (GAP). GTP-binding protein that does not act as an allosteric activator of the cholera toxin catalytic subunit. Recruits CYTH1, CYTH2, CYTH3 and CYTH4 to the plasma membrane in GDP-bound form. This chain is ADP-ribosylation factor-like protein 4D (Arl4d), found in Mus musculus (Mouse).